Reading from the N-terminus, the 1233-residue chain is Insulin receptor substrate 1 (1233 aa).

At serine 3 the chain carries Phosphoserine. The interval 3–133 is mediates interaction with PHIP; sequence SPPDTDGFSD…AGGGCGGSCS (131 aa). The PH domain maps to 12-115; sequence DVRKVGYLRK…WYQALLQLHN (104 aa). Serine 99 bears the Phosphoserine; by CK2 mark. The 105-residue stretch at 155–259 folds into the IRS-type PTB domain; it reads FKEVWQVILK…EAMRAMSDEF (105 aa). The disordered stretch occupies residues 257–425; it reads DEFRPRSKSQ…SDGGFISSDE (169 aa). Residues 264–276 show a composition bias toward low complexity; it reads KSQSSSSCSNPIS. Phosphoserine; by RPS6KB1 is present on residues serine 265 and serine 302. At serine 307 the chain carries Phosphoserine; by IKKB, MAPK8 and RPS6KB1. Phosphoserine is present on residues serine 318, serine 325, serine 340, and serine 343. Basic residues predominate over residues 349–358; it reads THAHRHRGSS. 2 stretches are compositionally biased toward low complexity: residues 378-399 and 407-419; these read SPSA…GSTS and SSAS…SDGG. A Phosphoserine modification is found at serine 414. Residues threonine 441 and threonine 448 each carry the phosphothreonine modification. A Phosphotyrosine; by INSR modification is found at tyrosine 460. A YXXM motif 1 motif is present at residues 460–463; sequence YICM. Residue serine 522 is modified to Phosphoserine; by RPS6KB1. Short sequence motifs (YXXM motif) lie at residues 546 to 549 and 608 to 611; these read YTEM and YMPM. Tyrosine 608 bears the Phosphotyrosine; by INSR mark. At serine 612 the chain carries Phosphoserine. The residue at position 628 (tyrosine 628) is a Phosphotyrosine; by INSR. A YXXM motif 4 motif is present at residues 628-631; it reads YMPM. Serine 632 carries the phosphoserine; by RPS6KB1 and ROCK2 modification. The segment at 651–720 is disordered; the sequence is QRVDPNGYMM…PPVESGGGKL (70 aa). Tyrosine 658 carries the post-translational modification Phosphotyrosine. The YXXM motif 5 motif lies at 658–661; that stretch reads YMMM. The segment covering 662-689 has biased composition (low complexity); that stretch reads SPSGSCSPDIGGGSSSSSSISAAPSGSS. The YXXM motif 6 signature appears at 727 to 730; it reads YMNM. Positions 766 to 985 are disordered; it reads FKHTQRPGEP…VPNSRGDYMT (220 aa). A compositionally biased stretch (basic and acidic residues) spans 771–780; that stretch reads RPGEPEEGAR. Low complexity-rich tracts occupy residues 785-794 and 801-810; these read RLSSSSGRLR and DSSSSTSSDS. The residue at position 789 (serine 789) is a Phosphoserine; by AMPK and SIK2. Serine 887 is subject to Phosphoserine. Phosphotyrosine; by INSR occurs at positions 891, 935, and 983. Residues 891-893 are GRB2-binding; sequence YVN. Short sequence motifs (YXXM motif) lie at residues 935–938, 983–986, and 1006–1009; these read YMNM, YMTM, and YADM. The interval 1015–1137 is disordered; the sequence is AEKASLPRPT…GSEDVKRHSS (123 aa). A compositionally biased stretch (low complexity) spans 1032–1042; it reads STASSSASVTP. 2 stretches are compositionally biased toward polar residues: residues 1043–1052 and 1069–1081; these read QGATAEQATH and TRVN…NQSA. 2 positions are modified to phosphoserine: serine 1096 and serine 1097. The segment covering 1116-1129 has biased composition (gly residues); the sequence is AAVGGSGGGGGGGS. Phosphotyrosine; by INSR is present on tyrosine 1173. Residues 1178–1233 are disordered; that stretch reads LAKEHSQDCPSQQQSLPPPPPHQPLGSNEGNSPRRSSEDLSNYASISFQKQPEDRQ. Lysine 1180 participates in a covalent cross-link: Glycyl lysine isopeptide (Lys-Gly) (interchain with G-Cter in ubiquitin). Positions 1203 to 1227 are enriched in polar residues; the sequence is GSNEGNSPRRSSEDLSNYASISFQK. Residue tyrosine 1220 is modified to Phosphotyrosine; by INSR.

Interacts (via phosphorylated YXXM motifs) with PIK3R1. Interacts with ROCK1. Interacts with GRB2. Interacts with SOCS7. Interacts (via IRS-type PTB domain) with IGF1R and INSR (via the tyrosine-phosphorylated NPXY motif). Interacts with UBTF and PIK3CA. Interacts (via PH domain) with PHIP. Interacts with FER. Interacts with ALK. Interacts with EIF2AK2/PKR. Interacts with GKAP1. Interacts with DGKZ in the absence of insulin; insulin stimulation decreases this interaction. Found in a ternary complex with DGKZ and PIP5K1A in the absence of insulin stimulation. Interacts with SQSTM1; the interaction is disrupted by the presence of tensin TNS2. Interacts with NCK1 (via SH2 domain). Interacts with NCK2 (via SH3 domain). Interacts with SH2B1; this interaction enhances leptin-induced activation of the PI3-kinase pathway. Interacts with DVL2; this interaction promotes the Wnt/beta-catenin signaling pathway. Post-translationally, serine phosphorylation of IRS1 is a mechanism for insulin resistance. Ser-307 phosphorylation inhibits insulin action through disruption of IRS1 interaction with the insulin receptor. Phosphorylation of Tyr-891 is required for GRB2-binding. Phosphorylated by ALK. Phosphorylated at Ser-265, Ser-302, Ser-632 and Ser-1097 by RPS6KB1; phosphorylation induces accelerated degradation of IRS1. Phosphorylated on tyrosine residues in response to insulin. In skeletal muscles, dephosphorylated on Tyr-608 by TNS2 under anabolic conditions; dephosphorylation results in the proteasomal degradation of IRS1. In terms of processing, ubiquitinated by the Cul7-RING(FBXW8) complex in a mTOR-dependent manner, leading to its degradation: the Cul7-RING(FBXW8) complex recognizes and binds IRS1 previously phosphorylated by S6 kinase (RPS6KB1 or RPS6KB2). Ubiquitinated by TRAF4 through 'Lys-29' linkage; this ubiquitination regulates the interaction of IRS1 with IGFR and IRS1 tyrosine phosphorylation upon IGF1 stimulation. S-nitrosylation at by BLVRB inhibits its activity. In terms of tissue distribution, expressed in osteoblasts, but not in osteoclasts.

Its subcellular location is the cytoplasm. The protein localises to the nucleus. Functionally, signaling adapter protein that participates in the signal transduction from two prominent receptor tyrosine kinases, insulin receptor/INSR and insulin-like growth factor I receptor/IGF1R. Plays therefore an important role in development, growth, glucose homeostasis as well as lipid metabolism. Upon phosphorylation by the insulin receptor, functions as a signaling scaffold that propagates insulin action through binding to SH2 domain-containing proteins including the p85 regulatory subunit of PI3K, NCK1, NCK2, GRB2 or SHP2. Recruitment of GRB2 leads to the activation of the guanine nucleotide exchange factor SOS1 which in turn triggers the Ras/Raf/MEK/MAPK signaling cascade. Activation of the PI3K/AKT pathway is responsible for most of insulin metabolic effects in the cell, and the Ras/Raf/MEK/MAPK is involved in the regulation of gene expression and in cooperation with the PI3K pathway regulates cell growth and differentiation. Acts a positive regulator of the Wnt/beta-catenin signaling pathway through suppression of DVL2 autophagy-mediated degradation leading to cell proliferation. The protein is Insulin receptor substrate 1 (Irs1) of Mus musculus (Mouse).